We begin with the raw amino-acid sequence, 224 residues long: N-(5'-phosphoribosyl)anthranilate isomerase (224 aa).

The protein belongs to the TrpF family.

It catalyses the reaction N-(5-phospho-beta-D-ribosyl)anthranilate = 1-(2-carboxyphenylamino)-1-deoxy-D-ribulose 5-phosphate. Its pathway is amino-acid biosynthesis; L-tryptophan biosynthesis; L-tryptophan from chorismate: step 3/5. In Sinorhizobium fredii (strain NBRC 101917 / NGR234), this protein is N-(5'-phosphoribosyl)anthranilate isomerase.